The following is a 566-amino-acid chain: Oxygen-dependent choline dehydrogenase (566 aa).

Position 7-36 (7-36 (DYIICGAGSAGNVLATRLTEDPNVTVLLLE)) interacts with FAD. The segment at 180–203 (NGYQQEGFGPMDRTVTPKGRRAST) is disordered. H474 (proton acceptor) is an active-site residue.

Belongs to the GMC oxidoreductase family. FAD serves as cofactor.

It catalyses the reaction choline + A = betaine aldehyde + AH2. The enzyme catalyses betaine aldehyde + NAD(+) + H2O = glycine betaine + NADH + 2 H(+). The protein operates within amine and polyamine biosynthesis; betaine biosynthesis via choline pathway; betaine aldehyde from choline (cytochrome c reductase route): step 1/1. Involved in the biosynthesis of the osmoprotectant glycine betaine. Catalyzes the oxidation of choline to betaine aldehyde and betaine aldehyde to glycine betaine at the same rate. The protein is Oxygen-dependent choline dehydrogenase of Burkholderia ambifaria (strain MC40-6).